The chain runs to 260 residues: Putative sgc region transcriptional regulator (260 aa).

In terms of domain architecture, HTH deoR-type spans 5 to 61; sequence RPDRIKQMLHYLWQHRHLSTQQAMELFGYAEATVRRDFQYIVNQYPGMIRGHGCLDF. Positions 22 to 41 form a DNA-binding region, H-T-H motif; sequence LSTQQAMELFGYAEATVRRD.

Putative transcriptional regulator for the sgcREAQCX region. The sequence is that of Putative sgc region transcriptional regulator (sgcR) from Escherichia coli (strain K12).